A 365-amino-acid chain; its full sequence is 3-dehydroquinate synthase (365 aa).

NAD(+) is bound by residues 106 to 110 (GVIGD), 130 to 131 (TT), Lys142, Lys151, and 169 to 172 (FFAT). 3 residues coordinate Zn(2+): Glu184, His247, and His264.

Belongs to the sugar phosphate cyclases superfamily. Dehydroquinate synthase family. Co(2+) is required as a cofactor. The cofactor is Zn(2+). It depends on NAD(+) as a cofactor.

It is found in the cytoplasm. The enzyme catalyses 7-phospho-2-dehydro-3-deoxy-D-arabino-heptonate = 3-dehydroquinate + phosphate. Its pathway is metabolic intermediate biosynthesis; chorismate biosynthesis; chorismate from D-erythrose 4-phosphate and phosphoenolpyruvate: step 2/7. In terms of biological role, catalyzes the conversion of 3-deoxy-D-arabino-heptulosonate 7-phosphate (DAHP) to dehydroquinate (DHQ). The polypeptide is 3-dehydroquinate synthase (Listeria monocytogenes serotype 4a (strain HCC23)).